The following is a 452-amino-acid chain: Keratin, type I cytoskeletal 42 (452 aa).

The interval 4–93 (TTSIRQFSTS…GVSDALLGGS (90 aa)) is head. Coiled-coil stretches lie at residues 93-132 (SEKE…WYKK) and 188-407 (NLRM…HLAT). Residues 94–129 (EKETMQNLNDRLATYLDRVRALEEANTDLEVKIREW) are coil 1A. Positions 94–405 (EKETMQNLND…RLLEGEDAHL (312 aa)) constitute an IF rod domain. Residues 130–147 (YKKQGPGPARDYSPYFKT) are linker 1. The interval 148–239 (IEDLRNKILA…KNHEEEMNAL (92 aa)) is coil 1B. The segment at 240–262 (RGQVGGDVNVEMDAAPGVDLSRI) is linker 12. Positions 263 to 401 (LNEMRDQYEK…ATYRRLLEGE (139 aa)) are coil 2. Positions 402 to 452 (DAHLATQYSSSLASQASREGTVTSRQVRTIVEEVQDGKVVSSREQVHRSTH) are tail.

The protein belongs to the intermediate filament family. Heterodimer of a type I and a type II keratin. Colocalizes with KRT8/KRT18 filament network.

The protein resides in the cytoplasm. The polypeptide is Keratin, type I cytoskeletal 42 (Rattus norvegicus (Rat)).